We begin with the raw amino-acid sequence, 237 residues long: Urease accessory protein UreF (237 aa).

It belongs to the UreF family. In terms of assembly, ureD, UreF and UreG form a complex that acts as a GTP-hydrolysis-dependent molecular chaperone, activating the urease apoprotein by helping to assemble the nickel containing metallocenter of UreC. The UreE protein probably delivers the nickel.

It localises to the cytoplasm. In terms of biological role, required for maturation of urease via the functional incorporation of the urease nickel metallocenter. The protein is Urease accessory protein UreF of Rhodopseudomonas palustris (strain HaA2).